The chain runs to 79 residues: MALNDKLDATKDKVSGKVKETTGKVTGDEKLEAKGKTEGLMGKAKEGLENIKDKASDLAEDVAEKFNDTVDSVKHKNEK.

The tract at residues 1–30 is disordered; that stretch reads MALNDKLDATKDKVSGKVKETTGKVTGDEK.

Belongs to the UPF0337 (CsbD) family.

The polypeptide is UPF0337 protein YhjA (yhjA) (Lactococcus lactis subsp. lactis (strain IL1403) (Streptococcus lactis)).